A 60-amino-acid chain; its full sequence is UPF0434 protein NMA0874 (60 aa).

This sequence belongs to the UPF0434 family.

The protein is UPF0434 protein NMA0874 of Neisseria meningitidis serogroup A / serotype 4A (strain DSM 15465 / Z2491).